A 2522-amino-acid chain; its full sequence is Neurogenic locus notch homolog protein 1 (2522 aa).

An N-terminal signal peptide occupies residues 1-19; it reads MYRIGLLVLIWSLLGLAQG. 4 EGF-like domains span residues 20–57, 58–99, 102–140, and 141–177; these read LRCT…ERCQ, YPNP…KVCL, VDNA…DSCQ, and QADP…ATCK. The Extracellular segment spans residues 20 to 1730; it reads LRCTQTAEMC…ETAKPPPPLY (1711 aa). 33 disulfide bridges follow: Cys-22–Cys-35, Cys-29–Cys-45, Cys-47–Cys-56, Cys-62–Cys-74, Cys-68–Cys-87, Cys-89–Cys-98, Cys-106–Cys-117, Cys-111–Cys-128, Cys-130–Cys-139, Cys-145–Cys-156, Cys-150–Cys-165, Cys-167–Cys-176, Cys-183–Cys-194, Cys-188–Cys-203, Cys-205–Cys-214, Cys-221–Cys-232, Cys-226–Cys-242, Cys-244–Cys-253, Cys-260–Cys-271, Cys-265–Cys-280, Cys-282–Cys-291, Cys-298–Cys-311, Cys-305–Cys-320, Cys-322–Cys-331, Cys-338–Cys-349, Cys-343–Cys-358, Cys-360–Cys-369, Cys-375–Cys-386, Cys-380–Cys-397, Cys-399–Cys-408, Cys-415–Cys-428, Cys-422–Cys-437, and Cys-439–Cys-448. An EGF-like 5; calcium-binding domain is found at 179–215; sequence DINECSQNPCRNGGQCLNEFGSYRCNCQNRFTGRNCE. The region spanning 217-254 is the EGF-like 6 domain; that stretch reads PYVPCNPSPCLNGGTCRQTDDTSYECTCLPGFSGQNCE. O-linked (Fuc...) threonine; alternate glycosylation is present at Thr-231. A glycan (O-linked (GalNAc...) threonine; alternate) is linked at Thr-231. The EGF-like 7; calcium-binding domain occupies 256-292; the sequence is NIDDCPSNNCRNGGTCVDGVNTYNCQCPPDWTGQYCT. The EGF-like 8; calcium-binding domain maps to 294–332; sequence DVDECQLMPNACQNGGTCHNTYGGYNCVCVNGWTGEDCS. In terms of domain architecture, EGF-like 9; calcium-binding spans 334 to 370; sequence NIDDCANAACHSGATCHDRVASFFCECPHGRTGLLCH. The 39-residue stretch at 371 to 409 folds into the EGF-like 10 domain; the sequence is LDNACISNPCNEGSNCDTNPVNGKAICTCPPGYTGPACN. The EGF-like 11; calcium-binding domain occupies 411 to 449; it reads DVDECSLGANPCEHGGRCTNTLGSFQCNCPQGYAGPRCE. Ca(2+) contacts are provided by Thr-431 and Ser-434. O-linked (Glc...) serine glycosylation occurs at Ser-434. 3 residues coordinate Ca(2+): Asp-451, Val-452, and Glu-454. The region spanning 451–487 is the EGF-like 12; calcium-binding domain; the sequence is DVNECLSNPCQNDATCLDQIGEFQCICMPGYEGLYCE. Disulfide bonds link Cys-455/Cys-466, Cys-460/Cys-475, and Cys-477/Cys-486. O-linked (Glc...) serine glycosylation occurs at Ser-457. A glycan (O-linked (Fuc...) threonine) is linked at Thr-465. Residues Asp-468 and Gln-469 each coordinate Ca(2+). Residues Asn-489, Ile-490, and Glu-492 each contribute to the Ca(2+) site. Residues 489 to 525 form the EGF-like 13; calcium-binding domain; the sequence is NIDECASNPCLHNGKCVDKINEFHCECPTGFNGNLCQ. 75 cysteine pairs are disulfide-bonded: Cys-493/Cys-504, Cys-498/Cys-513, Cys-515/Cys-524, Cys-531/Cys-542, Cys-536/Cys-551, Cys-553/Cys-562, Cys-569/Cys-579, Cys-574/Cys-588, Cys-590/Cys-599, Cys-606/Cys-617, Cys-611/Cys-626, Cys-628/Cys-637, Cys-644/Cys-654, Cys-649/Cys-663, Cys-665/Cys-674, Cys-681/Cys-692, Cys-686/Cys-701, Cys-703/Cys-712, Cys-719/Cys-729, Cys-724/Cys-738, Cys-740/Cys-749, Cys-756/Cys-767, Cys-761/Cys-776, Cys-778/Cys-787, Cys-794/Cys-805, Cys-799/Cys-814, Cys-816/Cys-825, Cys-832/Cys-843, Cys-837/Cys-854, Cys-856/Cys-865, Cys-872/Cys-883, Cys-877/Cys-892, Cys-894/Cys-903, Cys-910/Cys-921, Cys-915/Cys-930, Cys-932/Cys-941, Cys-948/Cys-959, Cys-953/Cys-968, Cys-970/Cys-979, Cys-986/Cys-997, Cys-991/Cys-1006, Cys-1008/Cys-1017, Cys-1024/Cys-1035, Cys-1029/Cys-1044, Cys-1046/Cys-1055, Cys-1062/Cys-1073, Cys-1067/Cys-1082, Cys-1084/Cys-1093, Cys-1100/Cys-1121, Cys-1115/Cys-1130, Cys-1132/Cys-1141, Cys-1148/Cys-1159, Cys-1153/Cys-1168, Cys-1170/Cys-1179, Cys-1186/Cys-1197, Cys-1191/Cys-1206, Cys-1208/Cys-1217, Cys-1224/Cys-1243, Cys-1237/Cys-1252, Cys-1254/Cys-1263, Cys-1270/Cys-1283, Cys-1275/Cys-1292, Cys-1294/Cys-1303, Cys-1310/Cys-1321, Cys-1315/Cys-1333, Cys-1335/Cys-1344, Cys-1351/Cys-1362, Cys-1356/Cys-1371, Cys-1373/Cys-1382, Cys-1390/Cys-1401, Cys-1395/Cys-1412, Cys-1414/Cys-1423, Cys-1447/Cys-1470, Cys-1452/Cys-1465, and Cys-1461/Cys-1477. An O-linked (Glc...) serine glycan is attached at Ser-495. Ca(2+) is bound by residues Asp-506 and Lys-507. Residues 527–563 form the EGF-like 14; calcium-binding domain; it reads DVDECASTPCKNGAKCLDGPNSYTCQCTEGFTGRHCE. Residues 565-600 form the EGF-like 15; calcium-binding domain; it reads DINECIPDPCHYGTCKDGIATFTCLCRPGYTGRLCD. Positions 602–638 constitute an EGF-like 16; calcium-binding domain; the sequence is DINECLSQPCQNGGQCTDRENGYICTCPKGTTGVNCE. One can recognise an EGF-like 17; calcium-binding domain in the interval 640–675; that stretch reads NLDDCASNPCDYGKCIDKIDGYECTCEPGYTGKMCN. The region spanning 677 to 713 is the EGF-like 18; calcium-binding domain; sequence NIDECASNPCRNGGTCKDKINGFTCVCPDGYHDHMCL. Positions 715-750 constitute an EGF-like 19; calcium-binding domain; sequence EVNECNSNPCIHGTCHDGINGYKCDCDAGWSGSNCD. An EGF-like 20; calcium-binding domain is found at 752–788; that stretch reads NNNECESNPCMNGGTCKDMTGAYICTCRAGFSGPNCQ. In terms of domain architecture, EGF-like 21; calcium-binding spans 790 to 826; it reads NINECASNPCLNRGTCIDDVAGYKCNCMLPYTGAICE. One can recognise an EGF-like 22 domain in the interval 828–866; it reads VLAPCSGSPCKNGGRCKESEDYETFSCECPPGWQGQTCE. Positions 868–904 constitute an EGF-like 23; calcium-binding domain; that stretch reads DMNECVNRPCRNGAMCQNTNGSYKCNCKPGYAGRHCE. The N-linked (GlcNAc...) asparagine glycan is linked to Asn-887. One can recognise an EGF-like 24; calcium-binding domain in the interval 906–942; the sequence is DIDDCQPNPCHNGGSCSDGINMFFCNCPAGFRGPKCE. Residues 944-980 form the EGF-like 25; calcium-binding domain; that stretch reads DINECASNPCKNGANCTDCVNSYTCTCQPGFSGIHCE. Asn-958 is a glycosylation site (N-linked (GlcNAc...) asparagine). The region spanning 982–1018 is the EGF-like 26 domain; that stretch reads NTPDCTESSCFNGGTCIDGINTFSCQCPPGFTGNYCQ. The EGF-like 27; calcium-binding domain occupies 1020-1056; sequence DINECDSKPCLNGGTCQDSYGAYKCTCPQGYTGLNCQ. EGF-like domains are found at residues 1058-1094 and 1096-1142; these read LVRW…VYCD and PSVS…SYCE. In terms of domain architecture, EGF-like 30; calcium-binding spans 1144–1180; sequence QVDECSPNPCQNGATCTDYLGGYSCECVAGYHGVNCS. N-linked (GlcNAc...) asparagine glycosylation is present at Asn-1178. In terms of domain architecture, EGF-like 31; calcium-binding spans 1182–1218; the sequence is EINECLSHPCHNGGTCIDLINTYKCSCPRGTQGVHCE. The 45-residue stretch at 1220–1264 folds into the EGF-like 32; calcium-binding domain; that stretch reads NVDDCTPFYDSVSLEPKCFNNGKCFDRVGGYNCICPPGFVGERCE. 4 EGF-like domains span residues 1266-1304, 1306-1345, 1347-1383, and 1386-1424; these read DVNE…RRCD, VVDG…ATCE, DART…ATCQ, and VVSP…LFCH. Thr-1400 is a glycosylation site (O-linked (Fuc...) threonine; alternate). O-linked (GalNAc...) threonine; alternate glycosylation is present at Thr-1400. LNR repeat units lie at residues 1447–1487, 1488–1529, and 1530–1564; these read CENE…PWKN, CTQS…CNPL, and YDQY…NMPE. Positions 1458, 1473, and 1476 each coordinate Ca(2+). Residue Asn-1487 is glycosylated (N-linked (GlcNAc...) asparagine). 5 disulfide bridges follow: Cys-1488/Cys-1512, Cys-1494/Cys-1507, Cys-1503/Cys-1519, Cys-1534/Cys-1547, and Cys-1543/Cys-1559. Asp-1500 contacts Ca(2+). An N-linked (GlcNAc...) asparagine glycan is attached at Asn-1508. Ca(2+) is bound by residues Asp-1515, Asp-1518, Asp-1540, Asp-1555, and Asp-1558. Asn-1584 carries an N-linked (GlcNAc...) asparagine glycan. The helical transmembrane segment at 1731–1751 threads the bilayer; sequence AMFSMLVIPLLIIFVIMVVIV. Topologically, residues 1752–2522 are cytoplasmic; it reads NKKRRREHGQ…QRTHIPEAFK (771 aa). 6 ANK repeats span residues 1877–1920, 1925–1954, 1958–1988, 1992–2021, 2025–2054, and 2058–2087; these read DGFT…QLHN, TGET…DANV, MGRT…DLDA, DGTT…DVNA, FGKS…NKDM, and KEET…NRDI. 3 disordered regions span residues 2146-2229, 2365-2404, and 2449-2522; these read MKPS…MPLN, LMQA…PFCS, and LTPP…EAFK. The segment covering 2184–2200 has biased composition (low complexity); sequence SLLDSGSSGVLSPVDSL. The span at 2218 to 2229 shows a compositional bias: polar residues; the sequence is SPFQQSPSMPLN. Residues 2365-2390 show a composition bias toward low complexity; sequence LMQAQQMQQQQNLQLHQSVQQQQHQN. Composition is skewed to polar residues over residues 2391–2404 and 2449–2469; these read SNAT…PFCS and LTPP…SHQL. Low complexity predominate over residues 2479–2494; the sequence is PSPESPDQWSSSSPHS. The span at 2495–2514 shows a compositional bias: polar residues; it reads NMSDWSEGISSPPTSMQPQR.

It belongs to the NOTCH family. Post-translationally, O-glycosylated on the EGF-like domains. Contains both O-linked fucose and O-linked glucose. O-linked glycosylation by galnt11 is involved in determination of left/right symmetry: glycosylation promotes activation of notch1, possibly by promoting cleavage by adam17, modulating the balance between motile and immotile (sensory) cilia at the left-right organiser (LRO). Synthesized in the endoplasmic reticulum as an inactive form which is proteolytically cleaved by a furin-like convertase in the trans-Golgi network before it reaches the plasma membrane to yield an active, ligand-accessible form. Cleavage results in a C-terminal fragment N(TM) and a N-terminal fragment N(EC). Following ligand binding, it is cleaved by adam17 to yield a membrane-associated intermediate fragment called notch extracellular truncation (NEXT). Following endocytosis, this fragment is then cleaved by presenilin dependent gamma-secretase to release a Notch-derived peptide containing the intracellular domain (NICD) from the membrane.

The protein localises to the cell membrane. It is found in the nucleus. Functions as a receptor for membrane-bound ligands Jagged-1 (JAG1), Jagged-2 (JAG2) and Delta-1 (DLL1) to regulate cell-fate determination. Upon ligand activation through the released notch intracellular domain (NICD) it forms a transcriptional activator complex with RBPJ/RBPSUH and activates genes of the enhancer of split locus. Affects the implementation of differentiation, proliferation and apoptotic programs. Involved in angiogenesis; negatively regulates endothelial cell proliferation and migration and angiogenic sprouting. Involved in the maturation of both CD4(+) and CD8(+) cells in the thymus. Important for follicular differentiation and possibly cell fate selection within the follicle. During cerebellar development, functions as a receptor for neuronal DNER and is involved in the differentiation of Bergmann glia. Represses neuronal and myogenic differentiation. May play an essential role in postimplantation development, probably in some aspect of cell specification and/or differentiation. May be involved in mesoderm development, somite formation and neurogenesis. Involved in determination of left/right symmetry by modulating the balance between motile and immotile (sensory) cilia at the left-right organiser (LRO). The polypeptide is Neurogenic locus notch homolog protein 1 (notch1) (Xenopus tropicalis (Western clawed frog)).